We begin with the raw amino-acid sequence, 335 residues long: tRNA N6-adenosine threonylcarbamoyltransferase (335 aa).

Residues His109, His113, and Tyr130 each coordinate a divalent metal cation. Substrate-binding positions include 130–134, Asp162, Gly177, Glu181, and Asn266; that span reads YVSGG. Asp294 contacts a divalent metal cation.

It belongs to the KAE1 / TsaD family. In terms of assembly, component of the EKC/KEOPS complex composed of at least tp53rk, tprkb, osgep and lage3; the whole complex dimerizes. Requires a divalent metal cation as cofactor.

The protein resides in the cytoplasm. It localises to the nucleus. The catalysed reaction is L-threonylcarbamoyladenylate + adenosine(37) in tRNA = N(6)-L-threonylcarbamoyladenosine(37) in tRNA + AMP + H(+). Functionally, component of the EKC/KEOPS complex that is required for the formation of a threonylcarbamoyl group on adenosine at position 37 (t(6)A37) in tRNAs that read codons beginning with adenine. The complex is probably involved in the transfer of the threonylcarbamoyl moiety of threonylcarbamoyl-AMP (TC-AMP) to the N6 group of A37. Osgep likely plays a direct catalytic role in this reaction, but requires other protein(s) of the complex to fulfill this activity. This Xenopus laevis (African clawed frog) protein is tRNA N6-adenosine threonylcarbamoyltransferase.